The chain runs to 178 residues: Translation initiation factor IF-3 (178 aa).

The protein belongs to the IF-3 family. As to quaternary structure, monomer.

Its subcellular location is the cytoplasm. Functionally, IF-3 binds to the 30S ribosomal subunit and shifts the equilibrium between 70S ribosomes and their 50S and 30S subunits in favor of the free subunits, thus enhancing the availability of 30S subunits on which protein synthesis initiation begins. This is Translation initiation factor IF-3 from Legionella pneumophila (strain Paris).